The following is a 338-amino-acid chain: Probable O-antigen biosynthesis glycosyltransferase WbiN (338 aa).

Belongs to the glycosyltransferase group 1 family. Glycosyltransferase 4 subfamily.

The enzyme catalyses N-acetyl-alpha-D-galactosaminyl-di-trans,octa-cis-undecaprenyl diphosphate + UDP-N-acetyl-alpha-D-galactosamine = alpha-D-GalNAc-(1-&gt;3)-alpha-D-GalNAc-di-trans,octa-cis-undecaprenyl diphosphate + UDP + H(+). The protein operates within bacterial outer membrane biogenesis; LPS O-antigen biosynthesis. Functionally, involved in the assembly of the O-repeating unit during O-antigen biosynthesis. The polypeptide is Probable O-antigen biosynthesis glycosyltransferase WbiN (Escherichia coli).